We begin with the raw amino-acid sequence, 423 residues long: Galactosylceramide sulfotransferase (423 aa).

The Cytoplasmic portion of the chain corresponds to Met1–Lys14. A helical; Signal-anchor for type II membrane protein membrane pass occupies residues Gly15 to Pro35. Residues Pro36 to Trp423 are Lumenal-facing. Residues Asn66 and Asn312 are each glycosylated (N-linked (GlcNAc...) asparagine).

This sequence belongs to the galactose-3-O-sulfotransferase family. As to expression, expressed in kidney proximal tubule, gastric mucosa and adenocarcinoma. Highly expressed in renal cell carcinoma cell lines.

The protein resides in the golgi apparatus membrane. It catalyses the reaction a beta-D-galactosyl-(1&lt;-&gt;1')-N-acylsphing-4-enine + 3'-phosphoadenylyl sulfate = an N-acyl-1-beta-D-(3-O-sulfo)-galactosyl-sphing-4-enine + adenosine 3',5'-bisphosphate + H(+). The enzyme catalyses a 1-O-alkyl-2-acyl-3-O-(beta-D-galactosyl)-sn-glycerol + 3'-phosphoadenylyl sulfate = a 1-O-alkyl-2-acyl-3-(beta-D-3-sulfogalactosyl)-sn-glycerol + adenosine 3',5'-bisphosphate + H(+). The catalysed reaction is a beta-D-Gal-(1&lt;-&gt;1')-ceramide + 3'-phosphoadenylyl sulfate = 1-(3-O-sulfo-beta-D-galactosyl)-ceramide + adenosine 3',5'-bisphosphate + H(+). It carries out the reaction a 1,2-diacyl-3-O-(beta-D-galactosyl)-sn-glycerol + 3'-phosphoadenylyl sulfate = 1,2-diacyl-3-(3-O-sulfo-beta-D-galactosyl)-sn-glycerol + adenosine 3',5'-bisphosphate + H(+). It catalyses the reaction a beta-D-Gal-(1-&gt;4)-beta-D-Glc-(1&lt;-&gt;1)-Cer(d18:1(4E)) + 3'-phosphoadenylyl sulfate = beta-D-3-sulfogalactosyl-(1-&gt;4)-beta-D-glucosyl-(1&lt;-&gt;1')-N-acylsphing-4-enine + adenosine 3',5'-bisphosphate + H(+). It participates in lipid metabolism; sphingolipid metabolism. Its function is as follows. Catalyzes the transfer of a sulfate group to position 3 of non-reducing beta-galactosyl residues in glycerolipids and sphingolipids, therefore participates in the biosynthesis of sulfoglycolipids. Catalyzes the synthesis of galactosylceramide sulfate (sulfatide), a major lipid component of the myelin sheath and of monogalactosylalkylacylglycerol sulfate (seminolipid), present in spermatocytes. Seems to prefer beta-glycosides at the non-reducing termini of sugar chains attached to a lipid moiety. Also acts on lactosylceramide, galactosyl 1-alkyl-2-sn-glycerol and galactosyl diacylglycerol (in vitro). The chain is Galactosylceramide sulfotransferase from Homo sapiens (Human).